The chain runs to 347 residues: NADH-ubiquinone oxidoreductase chain 2 (347 aa).

Transmembrane regions (helical) follow at residues 1-21, 25-45, 59-79, 96-116, 122-142, 148-168, 200-220, 240-260, 274-294, and 325-345; these read MNPL…GIVM, HWLT…PILM, YFLT…INLV, IILT…FWVP, VHLP…MSVL, MINL…GGWG, MALL…LTFM, ITTI…LSGF, NSII…FFYM, and LLSP…MLML.

It belongs to the complex I subunit 2 family. As to quaternary structure, core subunit of respiratory chain NADH dehydrogenase (Complex I) which is composed of 45 different subunits. Interacts with TMEM242.

The protein resides in the mitochondrion inner membrane. The catalysed reaction is a ubiquinone + NADH + 5 H(+)(in) = a ubiquinol + NAD(+) + 4 H(+)(out). Functionally, core subunit of the mitochondrial membrane respiratory chain NADH dehydrogenase (Complex I) which catalyzes electron transfer from NADH through the respiratory chain, using ubiquinone as an electron acceptor. Essential for the catalytic activity and assembly of complex I. The sequence is that of NADH-ubiquinone oxidoreductase chain 2 from Thoopterus nigrescens (Swift fruit bat).